The sequence spans 123 residues: Small ribosomal subunit protein uS12 (123 aa).

Position 89 is a 3-methylthioaspartic acid (D89).

Belongs to the universal ribosomal protein uS12 family. As to quaternary structure, part of the 30S ribosomal subunit. Contacts proteins S8 and S17. May interact with IF1 in the 30S initiation complex.

In terms of biological role, with S4 and S5 plays an important role in translational accuracy. Functionally, interacts with and stabilizes bases of the 16S rRNA that are involved in tRNA selection in the A site and with the mRNA backbone. Located at the interface of the 30S and 50S subunits, it traverses the body of the 30S subunit contacting proteins on the other side and probably holding the rRNA structure together. The combined cluster of proteins S8, S12 and S17 appears to hold together the shoulder and platform of the 30S subunit. This chain is Small ribosomal subunit protein uS12, found in Acidiphilium cryptum (strain JF-5).